A 521-amino-acid chain; its full sequence is Replicase polyprotein 1ab (521 aa).

An AV-Nsp11N/CoV-Nsp15M domain is found at 1-58 (GGGGQSFLAADNAVLVSTQCYKRHSYVEIPSNLLVQNGMSLKDGANLYVYKRVNGAFV). A NendoU domain is found at 75 to 216 (EPRSDVERDF…EDGSIKTCYP (142 aa)). Active-site residues include His-104, His-119, Lys-159, Lys-263, Asp-347, Lys-391, and Glu-424. The Nidovirus-type SAM-dependent 2'-O-MTase domain occupies 219–518 (QSAWTCGYNM…NTSFTSDSFV (300 aa)).

Functionally, the replicase polyprotein of coronaviruses is a multifunctional protein: it contains the activities necessary for the transcription of negative stranded RNA, leader RNA, subgenomic mRNAs and progeny virion RNA as well as proteinases responsible for the cleavage of the polyprotein into functional products. NendoU is a Mn(2+)-dependent, uridylate-specific enzyme, which leaves 2'-3'-cyclic phosphates 5' to the cleaved bond. The sequence is that of Replicase polyprotein 1ab (rep) from Gallus gallus (Chicken).